Reading from the N-terminus, the 500-residue chain is Trehalose-6-phosphate synthase (500 aa).

D-glucose 6-phosphate is bound at residue R28. 48 to 49 (GG) serves as a coordination point for UDP-alpha-D-glucose. The D-glucose 6-phosphate site is built by Y104 and D158. UDP-alpha-D-glucose is bound by residues R300 and K305. R338 is a D-glucose 6-phosphate binding site. Residue 403–407 (LVAKE) coordinates UDP-alpha-D-glucose.

The protein belongs to the glycosyltransferase 20 family. Homotetramer.

It catalyses the reaction ADP-alpha-D-glucose + D-glucose 6-phosphate = alpha,alpha-trehalose 6-phosphate + ADP + H(+). The enzyme catalyses CDP-alpha-D-glucose + D-glucose 6-phosphate = alpha,alpha-trehalose 6-phosphate + CDP + H(+). It carries out the reaction GDP-alpha-D-glucose + D-glucose 6-phosphate = alpha,alpha-trehalose 6-phosphate + GDP + H(+). The catalysed reaction is TDP-alpha-D-glucose + D-glucose 6-phosphate = 5-methyl-UDP + alpha,alpha-trehalose 6-phosphate + H(+). It catalyses the reaction D-glucose 6-phosphate + UDP-alpha-D-glucose = alpha,alpha-trehalose 6-phosphate + UDP + H(+). It participates in glycan biosynthesis; trehalose biosynthesis. In terms of biological role, probably involved in the osmoprotection via the biosynthesis of trehalose and in the production of glycogen and alpha-glucan via the TreS-Pep2 branch involved in the biosynthesis of maltose-1-phosphate (M1P). Catalyzes the transfer of glucose from UDP-glucose (UDP-Glc) to D-glucose 6-phosphate (Glc-6-P) to form trehalose-6-phosphate. Probably also able to use ADP-Glc, CDP-Glc, GDP-Glc and TDP-Glc as glucosyl donors. The polypeptide is Trehalose-6-phosphate synthase (Mycobacterium marinum (strain ATCC BAA-535 / M)).